The primary structure comprises 72 residues: Probable neurotoxin pcD-993 (72 aa).

Positions 1 to 19 (MNYLVMISFALLLVIGVES) are cleaved as a signal peptide. In terms of domain architecture, LCN-type CS-alpha/beta spans 21–72 (RDGYFVEPDNCVVHCMPSSEMCDRGCKHNGATSGSCKAFSKGGNACWCKGLR). 3 disulfide bridges follow: cysteine 35–cysteine 56, cysteine 42–cysteine 66, and cysteine 46–cysteine 68. Position 72 (arginine 72) is a propeptide, removed by a carboxypeptidase.

Belongs to the long (3 C-C) scorpion toxin superfamily. In terms of tissue distribution, expressed by the venom gland.

It is found in the secreted. This chain is Probable neurotoxin pcD-993, found in Androctonus australis (Sahara scorpion).